Reading from the N-terminus, the 766-residue chain is Exocyst complex component 6 (766 aa).

Residues 28–90 (NTKQIGDQLE…SLDTSLRQIS (63 aa)) are a coiled coil.

The protein belongs to the SEC15 family. The exocyst complex is composed of Sec3/Exoc1, Sec5/Exoc2, Sec6/Exoc3, Sec8/Exoc4, Sec10/Exoc5, Sec15/Exoc6, Exo70/Exoc7 and Exo84/Exoc8. Interacts with RAB3, RAB8, RAB11 and RAB27. As to expression, detected in developing rhabdomeres in photoreceptor cells.

The protein localises to the cell projection. It localises to the rhabdomere. Component of the exocyst complex involved in the docking of exocytic vesicles with fusion sites on the plasma membrane. In Drosophila melanogaster (Fruit fly), this protein is Exocyst complex component 6.